The following is a 495-amino-acid chain: uncharacterized protein (495 aa).

Residues 337-360 are disordered; sequence STSNRESDCSGNEDDSSNAKYAKK.

This is an uncharacterized protein from Caenorhabditis elegans.